We begin with the raw amino-acid sequence, 386 residues long: Outer membrane protein assembly factor BamB (386 aa).

The N-terminal stretch at 1–20 (MKKLFNQVLVAAGVLALLAG) is a signal peptide. Cys21 is lipidated: N-palmitoyl cysteine. Cys21 carries S-diacylglycerol cysteine lipidation.

It belongs to the BamB family. As to quaternary structure, part of the Bam complex.

It is found in the cell outer membrane. Part of the outer membrane protein assembly complex, which is involved in assembly and insertion of beta-barrel proteins into the outer membrane. The sequence is that of Outer membrane protein assembly factor BamB from Vibrio cholerae serotype O1 (strain ATCC 39315 / El Tor Inaba N16961).